A 131-amino-acid polypeptide reads, in one-letter code: Fumarate reductase subunit C (131 aa).

3 consecutive transmembrane segments (helical) span residues 30 to 50, 58 to 78, and 109 to 129; these read EGTC…VFAL, AGFV…VTLI, and IVRG…AVAL.

The protein belongs to the FrdC family. In terms of assembly, part of an enzyme complex containing four subunits: a flavoprotein (FrdA), an iron-sulfur protein (FrdB), and two hydrophobic anchor proteins (FrdC and FrdD).

It localises to the cell inner membrane. Two distinct, membrane-bound, FAD-containing enzymes are responsible for the catalysis of fumarate and succinate interconversion; fumarate reductase is used in anaerobic growth, and succinate dehydrogenase is used in aerobic growth. Anchors the catalytic components of the fumarate reductase complex to the cell inner membrane, binds quinones. This is Fumarate reductase subunit C from Proteus mirabilis (strain HI4320).